The primary structure comprises 359 residues: 3-dehydroquinate synthase (359 aa).

Residues 70-75 (DGEQYK), 105-109 (GVIGD), 129-130 (TT), Lys142, Lys151, and 169-172 (FYKT) contribute to the NAD(+) site. Residues Glu184, His247, and His264 each contribute to the Zn(2+) site.

It belongs to the sugar phosphate cyclases superfamily. Dehydroquinate synthase family. Co(2+) serves as cofactor. Zn(2+) is required as a cofactor. It depends on NAD(+) as a cofactor.

The protein resides in the cytoplasm. The catalysed reaction is 7-phospho-2-dehydro-3-deoxy-D-arabino-heptonate = 3-dehydroquinate + phosphate. It participates in metabolic intermediate biosynthesis; chorismate biosynthesis; chorismate from D-erythrose 4-phosphate and phosphoenolpyruvate: step 2/7. Catalyzes the conversion of 3-deoxy-D-arabino-heptulosonate 7-phosphate (DAHP) to dehydroquinate (DHQ). The chain is 3-dehydroquinate synthase from Francisella tularensis subsp. tularensis (strain WY96-3418).